The sequence spans 228 residues: Ribose-5-phosphate isomerase A (228 aa).

Substrate contacts are provided by residues 26 to 29, 81 to 84, and 94 to 97; these read SGST, DGAD, and KGGG. E103 (proton acceptor) is an active-site residue. Residue K121 participates in substrate binding.

This sequence belongs to the ribose 5-phosphate isomerase family. In terms of assembly, homodimer.

The enzyme catalyses aldehydo-D-ribose 5-phosphate = D-ribulose 5-phosphate. The protein operates within carbohydrate degradation; pentose phosphate pathway; D-ribose 5-phosphate from D-ribulose 5-phosphate (non-oxidative stage): step 1/1. In terms of biological role, catalyzes the reversible conversion of ribose-5-phosphate to ribulose 5-phosphate. The sequence is that of Ribose-5-phosphate isomerase A from Shouchella clausii (strain KSM-K16) (Alkalihalobacillus clausii).